The chain runs to 274 residues: Large ribosomal subunit protein uL2 (274 aa).

Disordered regions lie at residues 37–60 (QHQK…GHKH) and 224–252 (AMNP…WGNL). A compositionally biased stretch (basic residues) spans 50 to 60 (TTRHKGGGHKH). The span at 229-246 (DHPHGGGEGRTGEGRHAV) shows a compositional bias: basic and acidic residues.

Belongs to the universal ribosomal protein uL2 family. Part of the 50S ribosomal subunit. Forms a bridge to the 30S subunit in the 70S ribosome.

In terms of biological role, one of the primary rRNA binding proteins. Required for association of the 30S and 50S subunits to form the 70S ribosome, for tRNA binding and peptide bond formation. It has been suggested to have peptidyltransferase activity; this is somewhat controversial. Makes several contacts with the 16S rRNA in the 70S ribosome. This Paracidovorax citrulli (strain AAC00-1) (Acidovorax citrulli) protein is Large ribosomal subunit protein uL2.